Here is a 556-residue protein sequence, read N- to C-terminus: MSSQFVYTMHRVGKVVPPKRHILKDISLSFFPGAKIGVLGLNGAGKSTLLRIMAGVDKEFEGEARPQPGIKIGYLPQEPKLEPQQTVREAVEEAVSEVKNALTRLDEVYALYADPDADFDKLAAEQANLEAIIQAHDGHNLDNQLERAADALRLPDWDAKIEHLSGGERRRVALCRLLLEKPDMLLLDEPTNHLDAESVAWLERFLHDYEGTVVAITHDRYFLDNVAGWILELDRGEGIPWEGNYSSWLEQKEKRLEQEQATENARQKSIAKELEWVRQNPKGRQAKSKARMARFDELNSGEYQKRNETNELFIPPGPRLGDKVIEVQNLTKSYGDRTLIDDLSFSIPKGAIVGIIGANGAGKSTLFRMLSGQEQPDSGSVTMGETVVLASVDQFRDSMDDKKTVWEEVSNGQDILTIGNFEIPSRAYVGRFNFKGVDQQKRVGELSGGERGRLHLAKLLQRGGNVLLLDEPTNDLDVETLRALENAILEFPGCAMVISHDRWFLDRIATHILDYGDEGKVTFYEGNFSDYEEWKKKTLGDAATQPHRIKYKRIAK.

2 ABC transporter domains span residues 7–260 (YTMH…EQEQ) and 325–551 (IEVQ…RIKY). Residue 40–47 (GLNGAGKS) coordinates ATP. The interval 96–140 (SEVKNALTRLDEVYALYADPDADFDKLAAEQANLEAIIQAHDGHN) is arm. The ptIM stretch occupies residues 243-323 (GNYSSWLEQK…IPPGPRLGDK (81 aa)). ATP is bound at residue 357 to 364 (GANGAGKS).

It belongs to the ABC transporter superfamily. ABCF family. Translational throttle EttA subfamily. Monomer. Probably contacts ribosomal proteins L1, L5, L33 and S7, the 16S and 23S rRNA and the P-site containing tRNA(fMet).

Its subcellular location is the cytoplasm. It catalyses the reaction ATP + H2O = ADP + phosphate + H(+). A translation factor that gates the progression of the 70S ribosomal initiation complex (IC, containing tRNA(fMet) in the P-site) into the translation elongation cycle by using a mechanism sensitive to the ATP/ADP ratio. Binds to the 70S ribosome E-site where it modulates the state of the translating ribosome during subunit translocation. ATP hydrolysis probably frees it from the ribosome, which can enter the elongation phase. This is Energy-dependent translational throttle protein EttA from Haemophilus influenzae (strain ATCC 51907 / DSM 11121 / KW20 / Rd).